We begin with the raw amino-acid sequence, 146 residues long: Ribosome-binding factor A (146 aa).

The interval 122-146 (QQQFGSVDDVTENDIDEADDTEGKA) is disordered. Positions 130–146 (DVTENDIDEADDTEGKA) are enriched in acidic residues.

This sequence belongs to the RbfA family. Monomer. Binds 30S ribosomal subunits, but not 50S ribosomal subunits or 70S ribosomes.

The protein localises to the cytoplasm. One of several proteins that assist in the late maturation steps of the functional core of the 30S ribosomal subunit. Associates with free 30S ribosomal subunits (but not with 30S subunits that are part of 70S ribosomes or polysomes). Required for efficient processing of 16S rRNA. May interact with the 5'-terminal helix region of 16S rRNA. The sequence is that of Ribosome-binding factor A from Shewanella sp. (strain MR-7).